Reading from the N-terminus, the 196-residue chain is tRNA (pseudouridine(54)-N(1))-methyltransferase (196 aa).

Residue Leu126 participates in S-adenosyl-L-methionine binding.

It belongs to the methyltransferase superfamily. TrmY family. Homodimer.

The protein localises to the cytoplasm. The catalysed reaction is pseudouridine(54) in tRNA + S-adenosyl-L-methionine = N(1)-methylpseudouridine(54) in tRNA + S-adenosyl-L-homocysteine + H(+). Specifically catalyzes the N1-methylation of pseudouridine at position 54 (Psi54) in tRNAs. The sequence is that of tRNA (pseudouridine(54)-N(1))-methyltransferase from Halobacterium salinarum (strain ATCC 700922 / JCM 11081 / NRC-1) (Halobacterium halobium).